Consider the following 163-residue polypeptide: Nucleotide-binding protein GK0742 (163 aa).

It belongs to the YajQ family.

Functionally, nucleotide-binding protein. The polypeptide is Nucleotide-binding protein GK0742 (Geobacillus kaustophilus (strain HTA426)).